Reading from the N-terminus, the 173-residue chain is Small ribosomal subunit protein uS5 (173 aa).

One can recognise an S5 DRBM domain in the interval Leu17 to Val80.

This sequence belongs to the universal ribosomal protein uS5 family. Part of the 30S ribosomal subunit. Contacts proteins S4 and S8.

With S4 and S12 plays an important role in translational accuracy. Its function is as follows. Located at the back of the 30S subunit body where it stabilizes the conformation of the head with respect to the body. This is Small ribosomal subunit protein uS5 from Delftia acidovorans (strain DSM 14801 / SPH-1).